Here is a 454-residue protein sequence, read N- to C-terminus: MNNMHSQTTIAAIATPPGRGGVGVIRLSGPKAYDIAQKLTQKNLPEARMAGFRKFYDTDGSIMDEGIVLCFPNPHSFTGEDVVELQGHGGPVIQNALLGRLFELGAIAAKAGEFSMRAFENGKMDLVQAEAIADLIDATSQAAARSAVRSLQGAFSTKINTVLEKLIHLRLHVEAAIDFPEEEIDFLADGKILALLEDVQQSVHAVQTSARQGQLLREGLQVVIAGKPNAGKSSLLNALAGVERAIVTDIAGTTRDVLHEKISLNGLPITLTDTAGLRETGDIVEKEGIRRAIKEIEQADLLLLVYDLNQGDDPLKLAQEYFSEHIEPRRLMLIGNKCDLTGQSAEISDYQGFRHITVSAKQEMGVQGLVDAITAHAGFHPEEDTFIARTRHLDAMKRTQLYLAEAREQLVIFNAGELVAESLRLAQNALGEITGDFSADDLLGKIFGSFCIGK.

3 residues coordinate (6S)-5-formyl-5,6,7,8-tetrahydrofolate: Arg26, Glu84, and Lys123. Residues 219–378 form the TrmE-type G domain; the sequence is GLQVVIAGKP…LVDAITAHAG (160 aa). K(+) is bound at residue Asn229. Residues 229 to 234, 248 to 254, and 273 to 276 contribute to the GTP site; these read NAGKSS, TDIAGTT, and DTAG. Ser233 lines the Mg(2+) pocket. Positions 248, 250, and 253 each coordinate K(+). A Mg(2+)-binding site is contributed by Thr254. Lys454 serves as a coordination point for (6S)-5-formyl-5,6,7,8-tetrahydrofolate.

This sequence belongs to the TRAFAC class TrmE-Era-EngA-EngB-Septin-like GTPase superfamily. TrmE GTPase family. As to quaternary structure, homodimer. Heterotetramer of two MnmE and two MnmG subunits. It depends on K(+) as a cofactor.

The protein resides in the cytoplasm. Exhibits a very high intrinsic GTPase hydrolysis rate. Involved in the addition of a carboxymethylaminomethyl (cmnm) group at the wobble position (U34) of certain tRNAs, forming tRNA-cmnm(5)s(2)U34. This chain is tRNA modification GTPase MnmE, found in Acinetobacter baumannii (strain AYE).